Reading from the N-terminus, the 429-residue chain is Tyrosine--tRNA ligase (429 aa).

An L-tyrosine-binding site is contributed by Tyr36. A 'HIGH' region motif is present at residues Pro41 to His50. L-tyrosine-binding residues include Tyr171 and Gln175. Residues Lys231–Ser235 carry the 'KMSKS' region motif. Lys234 serves as a coordination point for ATP. The 58-residue stretch at Ala360 to Gly417 folds into the S4 RNA-binding domain.

This sequence belongs to the class-I aminoacyl-tRNA synthetase family. TyrS type 1 subfamily. As to quaternary structure, homodimer.

It is found in the cytoplasm. It catalyses the reaction tRNA(Tyr) + L-tyrosine + ATP = L-tyrosyl-tRNA(Tyr) + AMP + diphosphate + H(+). In terms of biological role, catalyzes the attachment of tyrosine to tRNA(Tyr) in a two-step reaction: tyrosine is first activated by ATP to form Tyr-AMP and then transferred to the acceptor end of tRNA(Tyr). This Nocardia farcinica (strain IFM 10152) protein is Tyrosine--tRNA ligase.